An 847-amino-acid chain; its full sequence is Guanine nucleotide exchange factor VAV3 (847 aa).

Residues 1 to 119 enclose the Calponin-homology (CH) domain; that stretch reads MEPWKQCAQW…ETLSRLSRTP (119 aa). The residue at position 141 (Tyr141) is a Phosphotyrosine. The DH domain maps to 192–371; the sequence is IRSCCLAEIR…KDLAQYVNEV (180 aa). Positions 400–502 constitute a PH domain; it reads RPQGDGEIRI…WLEQFEMALS (103 aa). Residues 513–562 form a Phorbol-ester/DAG-type zinc finger; it reads FHDFKMHTFTRVTSCRVCQMLLRGTFYQGYLCFKCGAKAHKECLGRVDNC. The interval 560–847 is sufficient for interaction with ROS1; sequence DNCGRVNSVE…FPSTYVEEDE (288 aa). The region spanning 592 to 660 is the SH3 1 domain; that stretch reads PGLPKMQVIR…PSDAVKPSPC (69 aa). The SH2 domain occupies 672–766; it reads WYAGPMERLQ…TLDTTLQFPY (95 aa). The SH3 2 domain occupies 788–847; the sequence is KVLGIAIARYDFCARDMRELSLLKGDMVKIYTKMSANGWWRGEVNGRVGWFPSTYVEEDE.

As to quaternary structure, interacts with the PH domain of APS. Interacts with ROS1; constitutive interaction that mediates VAV3 phosphorylation. Interacts (via SH2 domains) with the phosphorylated form of EPHA2. Post-translationally, phosphorylated. Phosphorylation can be mediated by ROS1. In osteoclasts, undergoes tyrosine phosphorylation in response to CSF1. As to expression, abundantly expressed in osteoclasts and mature osteoblasts. Also expressed in bone marrow macrophages (at protein level):.

Exchange factor for GTP-binding proteins RhoA, RhoG and, to a lesser extent, Rac1. Binds physically to the nucleotide-free states of those GTPases. Plays an important role in angiogenesis. Its recruitment by phosphorylated EPHA2 is critical for EFNA1-induced RAC1 GTPase activation and vascular endothelial cell migration and assembly. May be important for integrin-mediated signaling, at least in some cell types. In osteoclasts, along with SYK tyrosine kinase, required for signaling through integrin alpha-v/beta-1 (ITAGV-ITGB1), a crucial event for osteoclast proper cytoskeleton organization and function. This signaling pathway involves RAC1, but not RHO, activation. Necessary for proper wound healing. In the course of wound healing, required for the phagocytotic cup formation preceding macrophage phagocytosis of apoptotic neutrophils. Responsible for integrin beta-2-mediated macrophage adhesion and, to a lesser extent, contributes to beta-3-mediated adhesion. Does not affect integrin beta-1-mediated adhesion. This Mus musculus (Mouse) protein is Guanine nucleotide exchange factor VAV3 (Vav3).